The primary structure comprises 202 residues: Small ribosomal subunit protein uS4c (202 aa).

An S4 RNA-binding domain is found at 90-154 (MRLDNIIFRL…SQSIIIKNLN (65 aa)).

The protein belongs to the universal ribosomal protein uS4 family. As to quaternary structure, part of the 30S ribosomal subunit. Contacts protein S5. The interaction surface between S4 and S5 is involved in control of translational fidelity.

It localises to the plastid. The protein resides in the chloroplast. In terms of biological role, one of the primary rRNA binding proteins, it binds directly to 16S rRNA where it nucleates assembly of the body of the 30S subunit. With S5 and S12 plays an important role in translational accuracy. This Marchantia polymorpha (Common liverwort) protein is Small ribosomal subunit protein uS4c (rps4).